The following is a 301-amino-acid chain: N-carbamoylputrescine amidase (301 aa).

Residues valine 11–leucine 269 enclose the CN hydrolase domain. The active-site Proton acceptor is the glutamate 50. Residue lysine 123 is the Proton donor of the active site. The active-site Nucleophile is cysteine 160.

Belongs to the carbon-nitrogen hydrolase superfamily. Homooctamer.

It catalyses the reaction N-carbamoylputrescine + H2O + 2 H(+) = putrescine + NH4(+) + CO2. The protein operates within amine and polyamine biosynthesis; putrescine biosynthesis via agmatine pathway; putrescine from N-carbamoylputrescine (amidase route): step 1/1. Functionally, involved in polyamine biosynthesis. The protein is N-carbamoylputrescine amidase (CPA) of Oryza sativa subsp. japonica (Rice).